Consider the following 464-residue polypeptide: Methionine aminopeptidase 2 (464 aa).

Positions Met1–Glu86 are disordered. Residues Gly43–Asp54 are compositionally biased toward acidic residues. Residues Lys72–Asn83 show a composition bias toward basic residues. A substrate-binding site is contributed by His216. A divalent metal cation is bound by residues Asp237, Asp248, and His317. His325 lines the substrate pocket. Positions 350 and 445 each coordinate a divalent metal cation.

The protein belongs to the peptidase M24A family. Methionine aminopeptidase eukaryotic type 2 subfamily. It depends on Co(2+) as a cofactor. The cofactor is Zn(2+). Requires Mn(2+) as cofactor. Fe(2+) is required as a cofactor.

The protein localises to the cytoplasm. The enzyme catalyses Release of N-terminal amino acids, preferentially methionine, from peptides and arylamides.. Its function is as follows. Cotranslationally removes the N-terminal methionine from nascent proteins. The N-terminal methionine is often cleaved when the second residue in the primary sequence is small and uncharged (Met-Ala-, Cys, Gly, Pro, Ser, Thr, or Val). The chain is Methionine aminopeptidase 2 from Ajellomyces capsulatus (strain NAm1 / WU24) (Darling's disease fungus).